Consider the following 283-residue polypeptide: Cilia- and flagella-associated protein 77 (283 aa).

The tract at residues 151–170 (DQEDRRQKEPPPIPPNMTFG) is disordered.

The protein belongs to the CFAP77 family. As to quaternary structure, microtubule inner protein component of sperm flagellar doublet microtubules.

The protein localises to the cytoplasm. It is found in the cytoskeleton. The protein resides in the cilium axoneme. It localises to the flagellum axoneme. Its function is as follows. Microtubule inner protein (MIP) part of the dynein-decorated doublet microtubules (DMTs) in cilia axoneme, which is required for motile cilia beating. This Mus musculus (Mouse) protein is Cilia- and flagella-associated protein 77.